A 393-amino-acid polypeptide reads, in one-letter code: Cysteine protease ATG4B (393 aa).

Cysteine 73 (nucleophile) is an active-site residue. Catalysis depends on residues aspartate 278 and histidine 280. Positions 388–391 (FEIL) match the LIR motif.

Belongs to the peptidase C54 family.

The protein resides in the cytoplasm. It is found in the cytosol. The protein localises to the cytoplasmic vesicle. It localises to the autophagosome. Its subcellular location is the endoplasmic reticulum. The protein resides in the mitochondrion. The catalysed reaction is [protein]-C-terminal L-amino acid-glycyl-phosphatidylethanolamide + H2O = [protein]-C-terminal L-amino acid-glycine + a 1,2-diacyl-sn-glycero-3-phosphoethanolamine. The enzyme catalyses [protein]-C-terminal L-amino acid-glycyl-phosphatidylserine + H2O = [protein]-C-terminal L-amino acid-glycine + a 1,2-diacyl-sn-glycero-3-phospho-L-serine. Its function is as follows. Cysteine protease that plays a key role in autophagy by mediating both proteolytic activation and delipidation of ATG8 family proteins. Required for canonical autophagy (macroautophagy), non-canonical autophagy as well as for mitophagy. The protease activity is required for proteolytic activation of ATG8 family proteins: cleaves the C-terminal amino acid of ATG8 proteins to reveal a C-terminal glycine. Exposure of the glycine at the C-terminus is essential for ATG8 proteins conjugation to phosphatidylethanolamine (PE) and insertion to membranes, which is necessary for autophagy. Protease activity is also required to counteract formation of high-molecular weight conjugates of ATG8 proteins (ATG8ylation): acts as a deubiquitinating-like enzyme that removes ATG8 conjugated to other proteins, such as ATG3. In addition to the protease activity, also mediates delipidation of ATG8 family proteins. Catalyzes delipidation of PE-conjugated forms of ATG8 proteins during macroautophagy. Also involved in non-canonical autophagy, a parallel pathway involving conjugation of ATG8 proteins to single membranes at endolysosomal compartments, by catalyzing delipidation of ATG8 proteins conjugated to phosphatidylserine (PS). The polypeptide is Cysteine protease ATG4B (Gallus gallus (Chicken)).